The following is a 348-amino-acid chain: Aldose 1-epimerase (348 aa).

Arg-80 contacts substrate. Catalysis depends on His-180, which acts as the Proton donor. Asp-243 serves as a coordination point for substrate. The active-site Proton acceptor is the Glu-311.

It belongs to the aldose epimerase family.

The enzyme catalyses alpha-D-glucose = beta-D-glucose. The protein operates within carbohydrate metabolism; hexose metabolism. Mutarotase converts alpha-aldose to the beta-anomer. It is active on D-glucose, L-arabinose, D-xylose, D-galactose, maltose and lactose. The sequence is that of Aldose 1-epimerase (galM) from Streptococcus thermophilus.